A 274-amino-acid polypeptide reads, in one-letter code: Lipid phosphate phosphatase 1 (274 aa).

At 1–15 (MISVMADEKHKEYFK) the chain is on the lumenal side. Residues 16–33 (LYYFQYMIIGLCTILFLY) traverse the membrane as a helical segment. Residues 34-69 (SEISLVPRGQNIEFSLDDPSISKRYVPNELVGPLEC) lie on the Cytoplasmic side of the membrane. A helical transmembrane segment spans residues 70-87 (LILSVGLSNMVVFWTCMF). The Lumenal segment spans residues 88-117 (DKDLLKKNRVKRLRERPDGISNDFHFMHTS). The helical transmembrane segment at 118–139 (ILCLMLIISINAALTGALKLII) threads the bilayer. Residues 136–144 (KLIIGNLRP) form a phosphatase sequence motif I region. The Cytoplasmic segment spans residues 140-189 (GNLRPDFVDRCIPDLQKMSDSDSLVFGLDICKQTNKWILYEGLKSTPSGH). The interval 186-189 (PSGH) is phosphatase sequence motif II. A helical transmembrane segment spans residues 190-203 (SSFIVSTMGFTYLW). At 204–214 (QRVFTTRNTRS) the chain is on the lumenal side. A helical transmembrane segment spans residues 215-231 (CIWCPLLALVVMVSRVI). The phosphatase sequence motif III stretch occupies residues 228–239 (SRVIDHRHHWYD). Over 232 to 237 (DHRHHW) the chain is Cytoplasmic. A helical transmembrane segment spans residues 238 to 255 (YDVVSGAVLAFLVIYCCW). Over 256 to 274 (KWTFTNLAKRDILPSPVSV) the chain is Lumenal.

This sequence belongs to the PA-phosphatase related phosphoesterase family.

The protein resides in the golgi apparatus membrane. It carries out the reaction a 1,2-diacyl-sn-glycerol 3-diphosphate + H2O = a 1,2-diacyl-sn-glycero-3-phosphate + phosphate + H(+). The enzyme catalyses a 1,2-diacyl-sn-glycero-3-phosphate + H2O = a 1,2-diacyl-sn-glycerol + phosphate. The catalysed reaction is a 1-acyl-sn-glycero-3-phosphate + H2O = a 1-acyl-sn-glycerol + phosphate. PA phosphatase activity is magnesium ion-independent and potently inhibited by N-ethylmaleimide. Also inhibited by phenylglyoxal and propranolol. Its function is as follows. Catalyzes the dephosphorylation of diacylglycerol diphosphate (DGPP) to phosphatidate (PA) and the subsequent dephosphorylation of PA to diacylglycerol (DAG). Together with DPP1, regulates intracellular DGPP and PA levels which are phospholipid molecules believed to play a signaling role in stress response. Can also use lysophosphatidic acid (LPA) as a substrate. Substrate preference is PA &gt; DGPP &gt; LPA. This Saccharomyces cerevisiae (strain ATCC 204508 / S288c) (Baker's yeast) protein is Lipid phosphate phosphatase 1 (LPP1).